The following is a 426-amino-acid chain: Glucan endo-1,3-beta-glucosidase 11 (426 aa).

The signal sequence occupies residues 1-30; sequence MELTSFHRSSLLFLISLTLIILPTTTTSIG. N-linked (GlcNAc...) asparagine glycosylation is present at asparagine 112. The active-site Proton donor is the glutamate 121. N-linked (GlcNAc...) asparagine glycosylation occurs at asparagine 126. Catalysis depends on glutamate 266, which acts as the Nucleophile. Residues 360 to 372 show a composition bias toward gly residues; that stretch reads GGGTGGGNSSSGG. The segment at 360 to 389 is disordered; it reads GGGTGGGNSSSGGGRDKSPVFPVSPVAPDS. Asparagine 367 is a glycosylation site (N-linked (GlcNAc...) asparagine). Serine 398 is lipidated: GPI-anchor amidated serine. Residues 399 to 426 constitute a propeptide, removed in mature form; sequence ASPVTGKRKGKGAILSLVVSMLLARHLL.

This sequence belongs to the glycosyl hydrolase 17 family.

Its subcellular location is the secreted. The protein resides in the cell wall. It localises to the cell membrane. The catalysed reaction is Hydrolysis of (1-&gt;3)-beta-D-glucosidic linkages in (1-&gt;3)-beta-D-glucans.. In Arabidopsis thaliana (Mouse-ear cress), this protein is Glucan endo-1,3-beta-glucosidase 11.